The sequence spans 752 residues: DNA topoisomerase 4 subunit A (752 aa).

One can recognise a Topo IIA-type catalytic domain in the interval 31-494 (LPFIGDGLKP…EAKAMSEHDM (464 aa)). The active-site O-(5'-phospho-DNA)-tyrosine intermediate is Tyr120. Disordered stretches follow at residues 472 to 492 (YGDD…MSEH) and 718 to 752 (TGER…DSEE). Composition is skewed to basic and acidic residues over residues 473 to 492 (GDDR…MSEH) and 732 to 743 (QRIDRVEIDSPR).

It belongs to the type II topoisomerase GyrA/ParC subunit family. ParC type 1 subfamily. As to quaternary structure, heterotetramer composed of ParC and ParE.

Its subcellular location is the cell membrane. The catalysed reaction is ATP-dependent breakage, passage and rejoining of double-stranded DNA.. In terms of biological role, topoisomerase IV is essential for chromosome segregation. It relaxes supercoiled DNA. Performs the decatenation events required during the replication of a circular DNA molecule. This is DNA topoisomerase 4 subunit A from Escherichia coli O157:H7.